Consider the following 430-residue polypeptide: T-kininogen 2 (430 aa).

The N-terminal stretch at 1–18 is a signal peptide; that stretch reads MKLITILLLCSRLLPSLA. Residue Q19 is modified to Pyrrolidone carboxylic acid. Residues 28–131 form the Cystatin kininogen-type 1 domain; the sequence is CNDETVFQAV…TQICNITPGK (104 aa). Intrachain disulfides connect C28–C404, C83–C94, C107–C125, C141–C144, C205–C217, C228–C247, C263–C266, C327–C339, and C350–C369. N82 is a glycosylation site (N-linked (GlcNAc...) asparagine). The Cystatin kininogen-type 2 domain occupies 150–253; sequence MDSSDLKPVL…SQSCDLYPGD (104 aa). N-linked (GlcNAc...) asparagine glycosylation is found at N168 and N204. The Cystatin kininogen-type 3 domain maps to 272 to 375; that stretch reads VDSPELKEAL…TVRCQALDMM (104 aa). N326 carries an N-linked (GlcNAc...) asparagine glycan. The tract at residues 410-430 is disordered; sequence LSKAGAGPAPDHQAEASTVTP.

In terms of processing, as T-kinin is preceded by a Met instead of an Arg or Lys, it is not released from its precursor by either tissue or plasma kallikrein. In terms of tissue distribution, plasma.

The protein resides in the secreted. It localises to the extracellular space. Kininogens are plasma glycoproteins with a number of functions: (1) as precursor of the active peptide bradykinin they effect smooth muscle contraction, induction of hypotension and increase of vascular permeability. (2) They play a role in blood coagulation by helping to position optimally prekallikrein and factor XI next to factor XII. (3) They are inhibitor of thiol proteases. This Rattus norvegicus (Rat) protein is T-kininogen 2.